A 623-amino-acid polypeptide reads, in one-letter code: tRNA uridine 5-carboxymethylaminomethyl modification enzyme MnmG (623 aa).

12–17 (GAGHAG) is a binding site for FAD. 272 to 286 (GPRYCPSIEDKINRF) contributes to the NAD(+) binding site.

This sequence belongs to the MnmG family. In terms of assembly, homodimer. Heterotetramer of two MnmE and two MnmG subunits. The cofactor is FAD.

The protein localises to the cytoplasm. In terms of biological role, NAD-binding protein involved in the addition of a carboxymethylaminomethyl (cmnm) group at the wobble position (U34) of certain tRNAs, forming tRNA-cmnm(5)s(2)U34. In Flavobacterium johnsoniae (strain ATCC 17061 / DSM 2064 / JCM 8514 / BCRC 14874 / CCUG 350202 / NBRC 14942 / NCIMB 11054 / UW101) (Cytophaga johnsonae), this protein is tRNA uridine 5-carboxymethylaminomethyl modification enzyme MnmG.